Reading from the N-terminus, the 236-residue chain is uncharacterized protein (236 aa).

Residues 4–236 (QFLIAYRGYS…VKFQITAQIY (233 aa)) form the GP-PDE domain.

It to glycerophosphoryl diester phosphodiesterases (EC 3.1.4.46). The protein to M.genitalium MG293.

This is an uncharacterized protein from Mycoplasma genitalium (strain ATCC 33530 / DSM 19775 / NCTC 10195 / G37) (Mycoplasmoides genitalium).